The chain runs to 40 residues: Dolichyl-diphosphooligosaccharide--protein glycosyltransferase subunit 4 (40 aa).

Residues 1–4 (MITD) lie on the Lumenal side of the membrane. Residues 5–25 (VQLAIFSNVLGVFLFLLVVAY) form a helical membrane-spanning segment. Over 26-40 (HYINANTGKSIIKSK) the chain is Cytoplasmic.

Belongs to the OST4 family. Component of the oligosaccharyltransferase (OST) complex.

Its subcellular location is the endoplasmic reticulum membrane. Subunit of the oligosaccharyl transferase (OST) complex that catalyzes the initial transfer of a defined glycan (Glc(3)Man(9)GlcNAc(2) in eukaryotes) from the lipid carrier dolichol-pyrophosphate to an asparagine residue within an Asn-X-Ser/Thr consensus motif in nascent polypeptide chains, the first step in protein N-glycosylation. N-glycosylation occurs cotranslationally and the complex associates with the Sec61 complex at the channel-forming translocon complex that mediates protein translocation across the endoplasmic reticulum (ER). All subunits are required for a maximal enzyme activity. The sequence is that of Dolichyl-diphosphooligosaccharide--protein glycosyltransferase subunit 4 from Drosophila grimshawi (Hawaiian fruit fly).